The sequence spans 265 residues: Zwei Ig domain protein zig-1 (265 aa).

Positions 1–17 (MKNLLLITFFVVSTVTA) are cleaved as a signal peptide. The Extracellular portion of the chain corresponds to 18–232 (LGGRGSKSAL…KMVDVRSEFQ (215 aa)). Ig-like C2-type domains lie at 41–108 (HATD…TPHG) and 120–220 (PVVH…MLLV). Residues asparagine 83 and asparagine 193 are each glycosylated (N-linked (GlcNAc...) asparagine). Cysteine 155 and cysteine 202 are joined by a disulfide. The chain crosses the membrane as a helical span at residues 233–253 (WVYPLAVILITIFLLVVIIVF). Residues 254-265 (CEWRNKKSTSKA) are Cytoplasmic-facing.

In terms of tissue distribution, expressed in neurons and body wall muscles.

Its subcellular location is the cell membrane. In terms of biological role, probably not involved in maintaining the position of ASI and ASH head neuron cell bodies and ventral nerve cord axons of PVQ, PVP, RMEV, AVK and HSN neurons. This is Zwei Ig domain protein zig-1 from Caenorhabditis elegans.